Consider the following 197-residue polypeptide: Molybdenum cofactor guanylyltransferase (197 aa).

GTP contacts are provided by residues 10–12 (LAG), Lys-23, Asn-51, Asp-69, and Asp-99. Position 99 (Asp-99) interacts with Mg(2+).

It belongs to the MobA family. Monomer. Mg(2+) serves as cofactor.

It is found in the cytoplasm. The enzyme catalyses Mo-molybdopterin + GTP + H(+) = Mo-molybdopterin guanine dinucleotide + diphosphate. Transfers a GMP moiety from GTP to Mo-molybdopterin (Mo-MPT) cofactor (Moco or molybdenum cofactor) to form Mo-molybdopterin guanine dinucleotide (Mo-MGD) cofactor. The polypeptide is Molybdenum cofactor guanylyltransferase (Shewanella sp. (strain MR-4)).